The primary structure comprises 107 residues: UPF0122 protein STH1464 (107 aa).

The protein belongs to the UPF0122 family.

Its function is as follows. Might take part in the signal recognition particle (SRP) pathway. This is inferred from the conservation of its genetic proximity to ftsY/ffh. May be a regulatory protein. The sequence is that of UPF0122 protein STH1464 from Symbiobacterium thermophilum (strain DSM 24528 / JCM 14929 / IAM 14863 / T).